The sequence spans 176 residues: Flavodoxin-like domain-containing protein BilS (176 aa).

It functions in the pathway porphyrin-containing compound metabolism; protoheme degradation. Together with BilR, catalyzes reduction of mesobilirubin and/or bilirubin to urobilinogen, a key step during heme degradation. BilS is probably involved in electron transfer for the bilirubin reductase BilR. This Clostridioides difficile (strain CD3) protein is Flavodoxin-like domain-containing protein BilS.